The following is a 379-amino-acid chain: Protein psi1 (379 aa).

Residues 1-70 (MVADTKLYDC…RKLYDQYGIT (70 aa)) form the J domain. Disordered regions lie at residues 69-95 (ITEG…FPGA) and 176-205 (FGGG…AQNE). Residues 81 to 95 (AEGGPGAGFGGFPGA) show a composition bias toward gly residues.

Required for nuclear migration during mitosis. It is required for the normal initiation of translation. The sequence is that of Protein psi1 (psi1) from Schizosaccharomyces pombe (strain 972 / ATCC 24843) (Fission yeast).